The primary structure comprises 23 residues: NDPCEEVCLQHTGNVKACEEACQ.

2 disulfides stabilise this stretch: cysteine 4–cysteine 22 and cysteine 8–cysteine 18.

Belongs to the short scorpion toxin superfamily. Potassium channel inhibitor kappa-KTx family. Kappa-KTx 2 subfamily. In terms of tissue distribution, expressed by the venom gland.

The protein resides in the secreted. Decreases the amplitude of the potassium current of the rat channels Kv1.1/KCNA1 by 33% and Kv1.2/KCNA2 by 8% as well as human Kv1.3/KCNA3 by 70%. The chain is Potassium channel toxin kappa-KTx 2.3 from Opisthacanthus madagascariensis (Scorpion).